The chain runs to 159 residues: Ribosomal RNA large subunit methyltransferase H (159 aa).

Residues L76, G108, and 127 to 132 contribute to the S-adenosyl-L-methionine site; that span reads FSKMTF.

It belongs to the RNA methyltransferase RlmH family. As to quaternary structure, homodimer.

It is found in the cytoplasm. It carries out the reaction pseudouridine(1915) in 23S rRNA + S-adenosyl-L-methionine = N(3)-methylpseudouridine(1915) in 23S rRNA + S-adenosyl-L-homocysteine + H(+). Specifically methylates the pseudouridine at position 1915 (m3Psi1915) in 23S rRNA. This is Ribosomal RNA large subunit methyltransferase H from Staphylococcus haemolyticus (strain JCSC1435).